The primary structure comprises 162 residues: Ribose-5-phosphate isomerase B (162 aa).

D-ribulose 5-phosphate-binding positions include 11–12 (DH) and 70–74 (GSGNG). The active-site Proton acceptor is glutamate 75. Histidine 102 serves as the catalytic Proton donor. Asparagine 103, arginine 113, arginine 137, and arginine 141 together coordinate D-ribulose 5-phosphate.

It belongs to the LacAB/RpiB family. In terms of assembly, homodimer.

The catalysed reaction is aldehydo-D-ribose 5-phosphate = D-ribulose 5-phosphate. Its pathway is carbohydrate degradation; pentose phosphate pathway; D-ribose 5-phosphate from D-ribulose 5-phosphate (non-oxidative stage): step 1/1. Catalyzes the interconversion of ribulose-5-P and ribose-5-P. The chain is Ribose-5-phosphate isomerase B from Mycobacterium leprae (strain TN).